We begin with the raw amino-acid sequence, 482 residues long: Ribosomal protein uS12 methylthiotransferase RimO (482 aa).

Residues 2 to 115 enclose the MTTase N-terminal domain; that stretch reads MKVHIITLGC…IAEVVETFQP (114 aa). [4Fe-4S] cluster contacts are provided by cysteine 11, cysteine 47, cysteine 79, cysteine 177, cysteine 181, and cysteine 184. Positions 163–394 constitute a Radical SAM core domain; the sequence is RAVGPSAYLK…MRLQQRISRE (232 aa). Residues 397–466 form the TRAM domain; sequence RRWLGRVVRV…DYDLWGDVVG (70 aa).

It belongs to the methylthiotransferase family. RimO subfamily. It depends on [4Fe-4S] cluster as a cofactor.

It localises to the cytoplasm. The catalysed reaction is L-aspartate(89)-[ribosomal protein uS12]-hydrogen + (sulfur carrier)-SH + AH2 + 2 S-adenosyl-L-methionine = 3-methylsulfanyl-L-aspartate(89)-[ribosomal protein uS12]-hydrogen + (sulfur carrier)-H + 5'-deoxyadenosine + L-methionine + A + S-adenosyl-L-homocysteine + 2 H(+). Functionally, catalyzes the methylthiolation of an aspartic acid residue of ribosomal protein uS12. The sequence is that of Ribosomal protein uS12 methylthiotransferase RimO from Roseiflexus castenholzii (strain DSM 13941 / HLO8).